The chain runs to 436 residues: Eukaryotic translation initiation factor 4B (436 aa).

The tract at residues 56–98 is disordered; it reads AKNNSNNTRSGGFGGSFGGRSRLDPALGGGSSDRREEYPVPDA. Phosphoserine occurs at positions 65 and 71. Positions 101-183 constitute an RRM domain; it reads YRAVINNIPW…RTVYVSVAAP (83 aa). The disordered stretch occupies residues 185–406; sequence RGGGADVDWS…EKQNGDAKEN (222 aa). The 1; approximate repeat unit spans residues 190 to 210; the sequence is DVDWSSARGSNFQGDGREDAP. Residues 190–350 are 7 X approximate tandem repeats; the sequence is DVDWSSARGS…DWGAARGAQF (161 aa). 5 consecutive repeat copies span residues 211 to 232, 233 to 258, 259 to 284, 285 to 310, and 311 to 340. Positions 329–338 are enriched in basic and acidic residues; that stretch reads PRREREKEEP. Residues 341-350 form a 7; truncated repeat; that stretch reads DWGAARGAQF. 2 stretches are compositionally biased toward basic and acidic residues: residues 359-376 and 397-406; these read TYKD…EQPK and EKQNGDAKEN.

In terms of biological role, involved in translation initiation. May be the homolog of mammalian eIF4B and be part of an RNA helicase. STM1/TIF3 is a non-essential gene. In Saccharomyces cerevisiae (strain ATCC 204508 / S288c) (Baker's yeast), this protein is Eukaryotic translation initiation factor 4B (TIF3).